A 529-amino-acid polypeptide reads, in one-letter code: Bifunctional purine biosynthesis protein PurH (529 aa).

The MGS-like domain occupies 1–148 (MNNARPIRRA…KNHKDTTIIV (148 aa)).

Belongs to the PurH family.

The enzyme catalyses (6R)-10-formyltetrahydrofolate + 5-amino-1-(5-phospho-beta-D-ribosyl)imidazole-4-carboxamide = 5-formamido-1-(5-phospho-D-ribosyl)imidazole-4-carboxamide + (6S)-5,6,7,8-tetrahydrofolate. It catalyses the reaction IMP + H2O = 5-formamido-1-(5-phospho-D-ribosyl)imidazole-4-carboxamide. Its pathway is purine metabolism; IMP biosynthesis via de novo pathway; 5-formamido-1-(5-phospho-D-ribosyl)imidazole-4-carboxamide from 5-amino-1-(5-phospho-D-ribosyl)imidazole-4-carboxamide (10-formyl THF route): step 1/1. The protein operates within purine metabolism; IMP biosynthesis via de novo pathway; IMP from 5-formamido-1-(5-phospho-D-ribosyl)imidazole-4-carboxamide: step 1/1. The sequence is that of Bifunctional purine biosynthesis protein PurH from Shewanella halifaxensis (strain HAW-EB4).